Reading from the N-terminus, the 6907-residue chain is Fibrous sheath-interacting protein 2 (6907 aa).

Positions 273–292 (EERIEEQQHRNREESDRKKQ) are disordered. Ser-430 carries the post-translational modification Phosphoserine. Disordered regions lie at residues 439–472 (SQAFLDPSKEEKETNADWDGRPTKRSSYLCESGP), 954–990 (FQKSRQPRISSPSDTKEKYRLTGTRLSNSPRSGRPFP), 1545–1573 (VQEDNKEETKSKAKPVAPVSSKTPSTKEM), 3202–3257 (VSSD…FDQT), 5650–5672 (RTSSNEGRRDSPTQTCRDEEHHS), 5725–5781 (SAQS…KPGI), 5850–5880 (DKGNQFPGGKVSSVPKVPPRYKEPTTDEAPS), and 6852–6874 (GSANPSKEVISETPKPDVSKQGS). Over residues 445 to 460 (PSKEEKETNADWDGRP) the composition is skewed to basic and acidic residues. A compositionally biased stretch (polar residues) spans 954-966 (FQKSRQPRISSPS). Composition is skewed to basic and acidic residues over residues 1545–1555 (VQEDNKEETKS) and 3213–3229 (SVEDTVKNSEPTKRPDS). A compositionally biased stretch (low complexity) spans 5728–5741 (SVTTKKVSSSTNKN). A coiled-coil region spans residues 5738–5766 (TNKNISAKEKEEEEREKEKVREEIKSEPS). A compositionally biased stretch (basic and acidic residues) spans 5743 to 5778 (SAKEKEEEEREKEKVREEIKSEPSKPDDPQNQRESK).

As to quaternary structure, may interact with AKAP4. In terms of tissue distribution, predominantly expressed in testis.

Functionally, plays a role in spermatogenesis. The protein is Fibrous sheath-interacting protein 2 (FSIP2) of Homo sapiens (Human).